A 237-amino-acid polypeptide reads, in one-letter code: uncharacterized protein (237 aa).

Belongs to the bactofilin family.

This is an uncharacterized protein from Bacillus subtilis (strain 168).